We begin with the raw amino-acid sequence, 282 residues long: Homeobox protein vex1 (282 aa).

The segment at residues 129 to 188 (ASRARTKFTAEQLEELEKSFKENRYIGSSEKRRLSKVLKLSENQIKTWFQNRRMKFKRQT) is a DNA-binding region (homeobox).

The protein localises to the nucleus. Its function is as follows. Transcriptional repressor. Acts in a ventral signaling pathway downstream of bmp4 to antagonize the Spemann organizer and ventrally pattern the embryonic mesoderm. Represses transcription of the dorsal genes gsc and otx2. The chain is Homeobox protein vex1 from Xenopus tropicalis (Western clawed frog).